Reading from the N-terminus, the 768-residue chain is Polyadenylate-binding protein, cytoplasmic and nuclear (768 aa).

Residues 1–11 (MSAETATNPPV) are compositionally biased toward polar residues. The tract at residues 1-52 (MSAETATNPPVDTTPGAAPESATNGSNANVAADTTAGEASQTTSSTTPTAQP) is disordered. The segment covering 39–52 (ASQTTSSTTPTAQP) has biased composition (low complexity). 4 RRM domains span residues 55-133 (ASLY…WSQR), 143-220 (GNVF…HHIA), 236-314 (TNVY…RAQK), and 340-470 (VNLY…LAQR). 3 disordered regions span residues 374–428 (DFAP…EKKP), 633–662 (QQGMGRPGQAGRGQGAPAQAVGQRDENASP), and 739–768 (KNKGGDSGEPAADANKSKDASQETAEETKS). A compositionally biased stretch (gly residues) spans 637–646 (GRPGQAGRGQ). In terms of domain architecture, PABC spans 662–739 (PNGLTLQVLN…ALTVYDEYVK (78 aa)). The segment covering 753-768 (NKSKDASQETAEETKS) has biased composition (basic and acidic residues).

Belongs to the polyadenylate-binding protein type-1 family.

The protein localises to the cytoplasm. The protein resides in the nucleus. In terms of biological role, binds the poly(A) tail of mRNA. Appears to be an important mediator of the multiple roles of the poly(A) tail in mRNA biogenesis, stability and translation. In the nucleus, involved in both mRNA cleavage and polyadenylation. Is also required for efficient mRNA export to the cytoplasm. Acts in concert with a poly(A)-specific nuclease (PAN) to affect poly(A) tail shortening, which may occur concomitantly with either nucleocytoplasmic mRNA transport or translational initiation. In the cytoplasm, stimulates translation initiation and regulates mRNA decay through translation termination-coupled poly(A) shortening, probably mediated by PAN. The protein is Polyadenylate-binding protein, cytoplasmic and nuclear (PAB1) of Coccidioides immitis (strain RS) (Valley fever fungus).